Consider the following 496-residue polypeptide: RNA-binding motif protein, Y chromosome, family 1 member F/J (496 aa).

The RRM domain occupies 8–85; sequence GKLFIGGLNR…KAIKVEQAKK (78 aa). Disordered stretches follow at residues 81 to 345 and 452 to 496; these read EQAK…YAPP and KDQR…SSRY. Low complexity-rich tracts occupy residues 97–114 and 149–159; these read PASS…SARG and PVKRGPSSRSG. Residues 175–184 are compositionally biased toward polar residues; the sequence is NSWMGSQGPM. Basic and acidic residues-rich tracts occupy residues 204–214, 242–253, 276–289, 313–326, 335–345, and 484–496; these read RNDRMSTRHDG, DNGHSNRDEHSS, AYRD…DESY, GYRD…HESY, SSRETRDYAPP, and GESR…SSRY.

As to quaternary structure, interacts with splicing factor proteins SFRS3/SRP20, TRA2B/SFRS10, KHDRBS1/SAM68 and KHDRBS3. Testis-specific.

The protein resides in the nucleus. Functionally, RNA-binding protein which may be involved in spermatogenesis. Required for sperm development, possibly by participating in pre-mRNA splicing in the testis. The chain is RNA-binding motif protein, Y chromosome, family 1 member F/J (RBMY1F) from Homo sapiens (Human).